The chain runs to 542 residues: Glutamyl-tRNA(Gln) amidotransferase subunit B, mitochondrial (542 aa).

The protein belongs to the GatB/GatE family. GatB subfamily. As to quaternary structure, subunit of the heterotrimeric GatFAB amidotransferase (AdT) complex, composed of A, B and F subunits.

It is found in the mitochondrion. The enzyme catalyses L-glutamyl-tRNA(Gln) + L-glutamine + ATP + H2O = L-glutaminyl-tRNA(Gln) + L-glutamate + ADP + phosphate + H(+). Allows the formation of correctly charged Gln-tRNA(Gln) through the transamidation of misacylated Glu-tRNA(Gln) in the mitochondria. The reaction takes place in the presence of glutamine and ATP through an activated gamma-phospho-Glu-tRNA(Gln). In Candida glabrata (strain ATCC 2001 / BCRC 20586 / JCM 3761 / NBRC 0622 / NRRL Y-65 / CBS 138) (Yeast), this protein is Glutamyl-tRNA(Gln) amidotransferase subunit B, mitochondrial.